Here is a 138-residue protein sequence, read N- to C-terminus: ATP synthase epsilon chain (138 aa).

Belongs to the ATPase epsilon chain family. F-type ATPases have 2 components, CF(1) - the catalytic core - and CF(0) - the membrane proton channel. CF(1) has five subunits: alpha(3), beta(3), gamma(1), delta(1), epsilon(1). CF(0) has three main subunits: a, b and c.

Its subcellular location is the cell inner membrane. Its function is as follows. Produces ATP from ADP in the presence of a proton gradient across the membrane. The polypeptide is ATP synthase epsilon chain (Delftia acidovorans (strain DSM 14801 / SPH-1)).